Reading from the N-terminus, the 110-residue chain is Large ribosomal subunit protein uL22 (110 aa).

It belongs to the universal ribosomal protein uL22 family. Part of the 50S ribosomal subunit.

This protein binds specifically to 23S rRNA; its binding is stimulated by other ribosomal proteins, e.g. L4, L17, and L20. It is important during the early stages of 50S assembly. It makes multiple contacts with different domains of the 23S rRNA in the assembled 50S subunit and ribosome. In terms of biological role, the globular domain of the protein is located near the polypeptide exit tunnel on the outside of the subunit, while an extended beta-hairpin is found that lines the wall of the exit tunnel in the center of the 70S ribosome. This Geobacter metallireducens (strain ATCC 53774 / DSM 7210 / GS-15) protein is Large ribosomal subunit protein uL22.